Reading from the N-terminus, the 612-residue chain is Elongation factor 4 (612 aa).

The region spanning Ser12–Thr194 is the tr-type G domain. GTP contacts are provided by residues Asp24–Thr29 and Asn141–Asp144.

It belongs to the TRAFAC class translation factor GTPase superfamily. Classic translation factor GTPase family. LepA subfamily.

The protein resides in the cell membrane. The catalysed reaction is GTP + H2O = GDP + phosphate + H(+). Functionally, required for accurate and efficient protein synthesis under certain stress conditions. May act as a fidelity factor of the translation reaction, by catalyzing a one-codon backward translocation of tRNAs on improperly translocated ribosomes. Back-translocation proceeds from a post-translocation (POST) complex to a pre-translocation (PRE) complex, thus giving elongation factor G a second chance to translocate the tRNAs correctly. Binds to ribosomes in a GTP-dependent manner. The sequence is that of Elongation factor 4 from Bacillus subtilis (strain 168).